Here is a 171-residue protein sequence, read N- to C-terminus: ATP synthase subunit b (171 aa).

Residues Leu14–Val34 traverse the membrane as a helical segment. Residues Ser56–Arg97 show a composition bias toward basic and acidic residues. The disordered stretch occupies residues Ser56–Ala104.

It belongs to the ATPase B chain family. In terms of assembly, F-type ATPases have 2 components, F(1) - the catalytic core - and F(0) - the membrane proton channel. F(1) has five subunits: alpha(3), beta(3), gamma(1), delta(1), epsilon(1). F(0) has three main subunits: a(1), b(2) and c(10-14). The alpha and beta chains form an alternating ring which encloses part of the gamma chain. F(1) is attached to F(0) by a central stalk formed by the gamma and epsilon chains, while a peripheral stalk is formed by the delta and b chains.

It is found in the cell membrane. Functionally, f(1)F(0) ATP synthase produces ATP from ADP in the presence of a proton or sodium gradient. F-type ATPases consist of two structural domains, F(1) containing the extramembraneous catalytic core and F(0) containing the membrane proton channel, linked together by a central stalk and a peripheral stalk. During catalysis, ATP synthesis in the catalytic domain of F(1) is coupled via a rotary mechanism of the central stalk subunits to proton translocation. Its function is as follows. Component of the F(0) channel, it forms part of the peripheral stalk, linking F(1) to F(0). In Lactiplantibacillus plantarum (strain ATCC BAA-793 / NCIMB 8826 / WCFS1) (Lactobacillus plantarum), this protein is ATP synthase subunit b.